Here is a 337-residue protein sequence, read N- to C-terminus: Adenine deaminase (337 aa).

Residues His17, His19, and His197 each coordinate Zn(2+). Glu200 serves as the catalytic Proton donor. Residue Asp278 participates in Zn(2+) binding. Residue Asp279 participates in substrate binding.

It belongs to the metallo-dependent hydrolases superfamily. Adenosine and AMP deaminases family. Adenine deaminase type 2 subfamily. It depends on Zn(2+) as a cofactor.

It carries out the reaction adenine + H2O + H(+) = hypoxanthine + NH4(+). In terms of biological role, catalyzes the hydrolytic deamination of adenine to hypoxanthine. Plays an important role in the purine salvage pathway and in nitrogen catabolism. The polypeptide is Adenine deaminase (Zymomonas mobilis subsp. mobilis (strain ATCC 31821 / ZM4 / CP4)).